The following is a 576-amino-acid chain: MSLSPSRIRLLDSVTVNQISAGEVIENAASVVKELIENSLDAGADEIHIETLGGGRGQIVVRDNGVGMDPEEVPVALQRHATSKIAHFADIFSLASYGFRGEALPSIASISKMEIHTARAGGLGSKTLIEKGEPVCCEPAPRQQGTTIAVHSLFYNVPMRQSFQKSPQMDRLAIRRLLENSVLSSEGIGWTWISERRQELHVAKKQGFIERVALVLGESFVQEAFFIDKQQGDLRVLGFLGSPNQHRSTRQGQRLFINNRAVESSFISKKVAEAYAWMIPAQRYPIFVLKLFLPPMWCDFNVHPQKTEVRLLQEGQISNLLVEAISEALLRRSSSLEEIVLKVPTEKIPIENEGISVPSIRPAIVSAPLSCPTFSQQPYLKTEMATIVSRDSASSSLSVVEKVRFLTSLGKVLLVEDSEGVHVVFVQAARKHLFYVSLLSERLESRLACQTFLLPPSVQMTKLEADFLQMRLEALTALGIELSRISPDSFAIESAPPFIQEEELKEWIVALAQEGALHVGESFEQLVENTVQKLVFSRNARAFDYAWLDILWKLGKPEKAFDGEMIRRLVLDDDFM.

Belongs to the DNA mismatch repair MutL/HexB family.

This protein is involved in the repair of mismatches in DNA. It is required for dam-dependent methyl-directed DNA mismatch repair. May act as a 'molecular matchmaker', a protein that promotes the formation of a stable complex between two or more DNA-binding proteins in an ATP-dependent manner without itself being part of a final effector complex. In Chlamydia trachomatis serovar L2 (strain ATCC VR-902B / DSM 19102 / 434/Bu), this protein is DNA mismatch repair protein MutL.